The chain runs to 108 residues: Putative septation protein SpoVG (108 aa).

The segment at 84–108 is disordered; the sequence is FEKQSSVETEPVTEENMETAENENE. The span at 94-108 shows a compositional bias: acidic residues; that stretch reads PVTEENMETAENENE.

This sequence belongs to the SpoVG family.

Its function is as follows. Could be involved in septation. The protein is Putative septation protein SpoVG of Finegoldia magna (strain ATCC 29328 / DSM 20472 / WAL 2508) (Peptostreptococcus magnus).